The chain runs to 279 residues: MKIIILLGFLGATLSAPLIPQRLMSASNSNELLLNLNNGQLLPLRLQGPLNSWIPPFSGVLQQQQQAQIPGLAQFSLSALDQFAGLFPNQIPFPGQASFAQGAQAGQVDPSQAQTPPQTQPGPNHVMPYVFSFKMPQEQGQMFEYYPVYVLLPWEQPQQTVPRSPPQTRQQQYEEQIPFYDQFGYIPQLAEPAIPGGQQQLAFDPQLGTAPEIAVMSTGEEIPYLQKEVINFRRDSAGVLMPSTSPKPSTTNVFTSAIDRTITAKFPEEKAKTDGLREP.

Residues 1-15 form the signal peptide; the sequence is MKIIILLGFLGATLS. Low complexity predominate over residues 100-123; sequence AQGAQAGQVDPSQAQTPPQTQPGP. Residues 100–125 form a disordered region; it reads AQGAQAGQVDPSQAQTPPQTQPGPNH. Thr115 and Thr119 each carry an O-linked (GalNAc...) threonine glycan. Residues 127-129 form an interaction with ARHGEF5 region; sequence MPY. 6 O-linked (GalNAc...) threonine glycosylation sites follow: Thr168, Thr244, Thr250, Thr251, Thr255, and Thr273.

This sequence belongs to the ODAM family. As to quaternary structure, interacts (via C-terminus) with ARHGEF5. In terms of processing, O-glycosylated.

Its subcellular location is the secreted. It is found in the cytoplasm. It localises to the nucleus. Tooth-associated epithelia protein that probably plays a role in odontogenesis, the complex process that results in the initiation and generation of the tooth. May be incorporated in the enamel matrix at the end of mineralization process. Involved in the induction of RHOA activity via interaction with ARHGEF and expression of downstream factors such as ROCK. Plays a role in attachment of the junctional epithelium to the tooth surface. The protein is Odontogenic ameloblast-associated protein (ODAM) of Macaca mulatta (Rhesus macaque).